A 113-amino-acid chain; its full sequence is Large ribosomal subunit protein uL22 (113 aa).

It belongs to the universal ribosomal protein uL22 family. In terms of assembly, part of the 50S ribosomal subunit.

Functionally, this protein binds specifically to 23S rRNA; its binding is stimulated by other ribosomal proteins, e.g. L4, L17, and L20. It is important during the early stages of 50S assembly. It makes multiple contacts with different domains of the 23S rRNA in the assembled 50S subunit and ribosome. The globular domain of the protein is located near the polypeptide exit tunnel on the outside of the subunit, while an extended beta-hairpin is found that lines the wall of the exit tunnel in the center of the 70S ribosome. This chain is Large ribosomal subunit protein uL22, found in Chloroflexus aggregans (strain MD-66 / DSM 9485).